We begin with the raw amino-acid sequence, 417 residues long: Probable lysophospholipase BODYGUARD 4 (417 aa).

Residues 1–49 (MSFPRKFGTAIHAALSFIVFFFLDLLDAILCVVYEFVDEILEENSTGCY) form the signal peptide. C50 carries the N-palmitoyl cysteine lipid modification. One can recognise an AB hydrolase-1 domain in the interval 150-259 (VIFIHGFMGS…PPYFPSSVEG (110 aa)). Residue H154 is part of the active site. S225 (nucleophile) is an active-site residue. Catalysis depends on charge relay system residues D367 and H395.

As to expression, expressed in epidermal cells.

It localises to the cell membrane. The protein resides in the secreted. Its subcellular location is the cell wall. Involved in cuticle development and morphogenesis. This Arabidopsis thaliana (Mouse-ear cress) protein is Probable lysophospholipase BODYGUARD 4.